A 255-amino-acid polypeptide reads, in one-letter code: NAD kinase (255 aa).

Asp44 acts as the Proton acceptor in catalysis. Residues 44–45 (DG), 114–115 (NE), Asp144, Ala152, and 155–160 (TAYNLS) contribute to the NAD(+) site.

This sequence belongs to the NAD kinase family. Requires a divalent metal cation as cofactor.

It is found in the cytoplasm. The enzyme catalyses NAD(+) + ATP = ADP + NADP(+) + H(+). Functionally, involved in the regulation of the intracellular balance of NAD and NADP, and is a key enzyme in the biosynthesis of NADP. Catalyzes specifically the phosphorylation on 2'-hydroxyl of the adenosine moiety of NAD to yield NADP. In Hyphomonas neptunium (strain ATCC 15444), this protein is NAD kinase.